A 660-amino-acid polypeptide reads, in one-letter code: tRNA 5-methylaminomethyl-2-thiouridine biosynthesis bifunctional protein MnmC (660 aa).

Positions 1–242 are tRNA (mnm(5)s(2)U34)-methyltransferase; that stretch reads MTDRIVPATL…KRAMLVGEFA (242 aa). The segment at 266 to 660 is FAD-dependent cmnm(5)s(2)U34 oxidoreductase; it reads IGAGLAGCAV…VRALRHGRVA (395 aa).

This sequence in the N-terminal section; belongs to the methyltransferase superfamily. tRNA (mnm(5)s(2)U34)-methyltransferase family. The protein in the C-terminal section; belongs to the DAO family. It depends on FAD as a cofactor.

Its subcellular location is the cytoplasm. The enzyme catalyses 5-aminomethyl-2-thiouridine(34) in tRNA + S-adenosyl-L-methionine = 5-methylaminomethyl-2-thiouridine(34) in tRNA + S-adenosyl-L-homocysteine + H(+). Catalyzes the last two steps in the biosynthesis of 5-methylaminomethyl-2-thiouridine (mnm(5)s(2)U) at the wobble position (U34) in tRNA. Catalyzes the FAD-dependent demodification of cmnm(5)s(2)U34 to nm(5)s(2)U34, followed by the transfer of a methyl group from S-adenosyl-L-methionine to nm(5)s(2)U34, to form mnm(5)s(2)U34. The polypeptide is tRNA 5-methylaminomethyl-2-thiouridine biosynthesis bifunctional protein MnmC (Burkholderia pseudomallei (strain 1106a)).